Consider the following 296-residue polypeptide: 4-hydroxybenzoate octaprenyltransferase (296 aa).

Helical transmembrane passes span 28-48 (PIGI…AGLG), 52-72 (LANV…GCCI), 102-122 (ALAL…CTNS), 145-167 (TYYP…FTAA), 174-196 (SAWL…YAMV), 219-239 (MIIL…GSRF), 241-261 (LGGW…WEYW), and 275-295 (FLHN…DYAL).

It belongs to the UbiA prenyltransferase family. The cofactor is Mg(2+).

It localises to the cell inner membrane. It catalyses the reaction all-trans-octaprenyl diphosphate + 4-hydroxybenzoate = 4-hydroxy-3-(all-trans-octaprenyl)benzoate + diphosphate. The protein operates within cofactor biosynthesis; ubiquinone biosynthesis. Its function is as follows. Catalyzes the prenylation of para-hydroxybenzoate (PHB) with an all-trans polyprenyl group. Mediates the second step in the final reaction sequence of ubiquinone-8 (UQ-8) biosynthesis, which is the condensation of the polyisoprenoid side chain with PHB, generating the first membrane-bound Q intermediate 3-octaprenyl-4-hydroxybenzoate. This is 4-hydroxybenzoate octaprenyltransferase from Pseudomonas putida (strain W619).